Here is a 478-residue protein sequence, read N- to C-terminus: MSQKFDVVVIGAGPGGYVAAIRAAQLGLKTACIEKYIGKEGKVALGGTCLNVGCIPSKALLDSSYKYHEAKEAFKVHGIEAKGVTIDVPAMVARKANIVKNLTGGIATLFKANGVTSFEGHGKLLANKQVEVTGLDGKTQVLEAENVIIASGSRPVEIPPAPLTDDIIVDSTGALEFQAVPKKLGVIGAGVIGLELGSVWARLGAEVTVLEALDKFLPAADEQIAKEALKVLTKQGLNIRLGARVTASEVKKKQVTVTFTDANGEQKETFDKLIVAVGRRPVTTDLLAADSGVTLDERGFIYVDDHCKTSVPGVFAIGDVVRGAMLAHKASEEGVMVAERIAGHKAQMNYDLIPSVIYTHPEIAWVGKTEQTLKAEGVEVNVGTFPFAASGRAMAANDTTGLVKVIADAKTDRVLGVHVIGPSAAELVQQGAIGMEFGTSAEDLGMMVFSHPTLSEALHEAALAVNGHAIHIANRKKR.

FAD is bound by residues 34–49 (EKYI…GGTC), Lys-58, and Gly-122. Cys-49 and Cys-54 are disulfide-bonded. NAD(+) is bound by residues 188–192 (GAGVI), Glu-211, Val-245, and 276–279 (AVGR). Asp-319 and Ala-327 together coordinate FAD. The active-site Proton acceptor is His-451.

This sequence belongs to the class-I pyridine nucleotide-disulfide oxidoreductase family. As to quaternary structure, homodimer. Requires FAD as cofactor.

The protein localises to the cytoplasm. It carries out the reaction N(6)-[(R)-dihydrolipoyl]-L-lysyl-[protein] + NAD(+) = N(6)-[(R)-lipoyl]-L-lysyl-[protein] + NADH + H(+). Its function is as follows. The branched-chain alpha-keto dehydrogenase complex catalyzes the overall conversion of alpha-keto acids to acyl-CoA and CO(2). It contains multiple copies of 3 enzymatic components: branched-chain alpha-keto acid decarboxylase (E1), lipoamide acyltransferase (E2) and lipoamide dehydrogenase (E3). Functionally, also acts in the glycine cleavage system. In Pseudomonas aeruginosa (strain ATCC 15692 / DSM 22644 / CIP 104116 / JCM 14847 / LMG 12228 / 1C / PRS 101 / PAO1), this protein is Dihydrolipoyl dehydrogenase (lpdG).